A 456-amino-acid chain; its full sequence is Bifunctional protein GlmU (456 aa).

Residues 1 to 231 (MERTCLAIIL…EEELTGCNTR (231 aa)) form a pyrophosphorylase region. UDP-N-acetyl-alpha-D-glucosamine-binding positions include 10–13 (LAAG), Lys-24, Gln-77, and 82–83 (GT). Asp-107 contacts Mg(2+). Gly-143, Glu-157, Asn-172, and Asn-229 together coordinate UDP-N-acetyl-alpha-D-glucosamine. Asn-229 contributes to the Mg(2+) binding site. Residues 232–252 (AELAYIERLWQQRRRHELMLA) form a linker region. Positions 253 to 456 (GVSMVAPETV…LARKIAKAAE (204 aa)) are N-acetyltransferase. Residues Arg-318 and Lys-336 each coordinate UDP-N-acetyl-alpha-D-glucosamine. The active-site Proton acceptor is His-348. Tyr-351 and Asn-362 together coordinate UDP-N-acetyl-alpha-D-glucosamine. Residues Ala-365, 371-372 (NY), Ser-390, Ser-408, and Arg-425 each bind acetyl-CoA.

The protein in the N-terminal section; belongs to the N-acetylglucosamine-1-phosphate uridyltransferase family. In the C-terminal section; belongs to the transferase hexapeptide repeat family. As to quaternary structure, homotrimer. Requires Mg(2+) as cofactor.

It is found in the cytoplasm. It catalyses the reaction alpha-D-glucosamine 1-phosphate + acetyl-CoA = N-acetyl-alpha-D-glucosamine 1-phosphate + CoA + H(+). The enzyme catalyses N-acetyl-alpha-D-glucosamine 1-phosphate + UTP + H(+) = UDP-N-acetyl-alpha-D-glucosamine + diphosphate. It functions in the pathway nucleotide-sugar biosynthesis; UDP-N-acetyl-alpha-D-glucosamine biosynthesis; N-acetyl-alpha-D-glucosamine 1-phosphate from alpha-D-glucosamine 6-phosphate (route II): step 2/2. The protein operates within nucleotide-sugar biosynthesis; UDP-N-acetyl-alpha-D-glucosamine biosynthesis; UDP-N-acetyl-alpha-D-glucosamine from N-acetyl-alpha-D-glucosamine 1-phosphate: step 1/1. Its pathway is bacterial outer membrane biogenesis; LPS lipid A biosynthesis. In terms of biological role, catalyzes the last two sequential reactions in the de novo biosynthetic pathway for UDP-N-acetylglucosamine (UDP-GlcNAc). The C-terminal domain catalyzes the transfer of acetyl group from acetyl coenzyme A to glucosamine-1-phosphate (GlcN-1-P) to produce N-acetylglucosamine-1-phosphate (GlcNAc-1-P), which is converted into UDP-GlcNAc by the transfer of uridine 5-monophosphate (from uridine 5-triphosphate), a reaction catalyzed by the N-terminal domain. The protein is Bifunctional protein GlmU of Sinorhizobium medicae (strain WSM419) (Ensifer medicae).